The chain runs to 653 residues: Dystrotelin (653 aa).

The ZZ-type zinc-finger motif lies at 223–279 (THPVRCSVCRTFPIIGLRYHCLKCLDFDICELCFLSGLHKNSHEKSHTVMEECVQMS). Zn(2+) is bound by residues C228, C231, C243, C246, C252, C255, H265, and H269. Positions 384-411 (RDSLNTLLRERRLLRKQLHRYKQKLQGT) form a coiled coil.

Strongly expressed in the nervous and muscular tissues.

The protein resides in the cell membrane. The protein is Dystrotelin (Dytn) of Mus musculus (Mouse).